The chain runs to 134 residues: Ribosome-binding factor A (134 aa).

This sequence belongs to the RbfA family. As to quaternary structure, monomer. Binds 30S ribosomal subunits, but not 50S ribosomal subunits or 70S ribosomes.

It localises to the cytoplasm. Functionally, one of several proteins that assist in the late maturation steps of the functional core of the 30S ribosomal subunit. Associates with free 30S ribosomal subunits (but not with 30S subunits that are part of 70S ribosomes or polysomes). Required for efficient processing of 16S rRNA. May interact with the 5'-terminal helix region of 16S rRNA. In Psychrobacter cryohalolentis (strain ATCC BAA-1226 / DSM 17306 / VKM B-2378 / K5), this protein is Ribosome-binding factor A.